The chain runs to 353 residues: Phosphate acyltransferase (353 aa).

The protein belongs to the PlsX family. As to quaternary structure, homodimer. Probably interacts with PlsY.

It is found in the cytoplasm. The enzyme catalyses a fatty acyl-[ACP] + phosphate = an acyl phosphate + holo-[ACP]. It functions in the pathway lipid metabolism; phospholipid metabolism. In terms of biological role, catalyzes the reversible formation of acyl-phosphate (acyl-PO(4)) from acyl-[acyl-carrier-protein] (acyl-ACP). This enzyme utilizes acyl-ACP as fatty acyl donor, but not acyl-CoA. The chain is Phosphate acyltransferase from Bradyrhizobium diazoefficiens (strain JCM 10833 / BCRC 13528 / IAM 13628 / NBRC 14792 / USDA 110).